The primary structure comprises 707 residues: MDSQKNTNLALQALEVLAQYHNISINPEEIKHKFDIDGHGLNQTKWLLAAKSLGLKVRTANKTVDRLPFLHLPALAWRDDGEHFILLKIDQETDRYLIFDLIQKNPIVLDKNEFEERYQSKVILIASRASIVGNLAKFDFTWFIPAVIKYRKIFIETLIVSIFLQIFALITPLFFQVVMDKVLVHRGFSTLNVITVALAIVVLFEIILGGLRTYVFAHSTSRIDVELGARLFRHLLALPISYFEARRVGDTVARVRELDQIRNFLTGQALTSILDLLFSFIFFAVMWYYSPKLTLVVLGSLPCYVIWSVFISPILRRRLDDKFARNADNQSFLVESVTAINTIKAMAISPQMTNIWDKQLASYVAVSFKVTVLATIGQQGIQLIQKAVMVINLWLGAHLVISGDLSIGQLIAFNMLAGQIISPVIRLAQIWQDFQQVGISVTRLGDVLNSPTENNTASVSLPEIQGEISFRNIKFRYKPDSPMILNNINLDISQGEVIGIVGRSGSGKSTLTKLIQRFYIPEQGQVLIDGHDLALADPNWLRRQVGVVLQDNVLLNRSIRENIALTNPGMPMEKVIAAAKLAGAHDFISELREGYNTVVGEQGAGLSGGQRQRIAIARALVNNPRILIFDEATSALDYESENIIMHNMHKICQNRTVLIIAHRLSTVKNADRIIVMDKGEIIEQGKHQELLKDEKGLYSYLHQLQVN.

Residues 4-125 (QKNTNLALQA…ERYQSKVILI (122 aa)) enclose the Peptidase C39 domain. Residue His-83 is part of the active site. The next 5 membrane-spanning stretches (helical) occupy residues 158-178 (LIVS…FQVV), 191-211 (LNVI…LGGL), 269-289 (ALTS…MWYY), 295-315 (LVVL…SPIL), and 387-407 (AVMV…DLSI). One can recognise an ABC transmembrane type-1 domain in the interval 158–436 (LIVSIFLQIF…LAQIWQDFQQ (279 aa)). In terms of domain architecture, ABC transporter spans 468–703 (ISFRNIKFRY…EKGLYSYLHQ (236 aa)). 502–509 (GRSGSGKS) lines the ATP pocket.

It belongs to the ABC transporter superfamily. Protein-1 exporter (TC 3.A.1.109) family. In terms of assembly, probably part of a complex composed of LtxB, LtxD and TdeA, which forms a single transport channel across the two membranes.

It localises to the cell inner membrane. The enzyme catalyses ATP + H2O + proteinSide 1 = ADP + phosphate + proteinSide 2.. Functionally, involved in the export of the LtxA leukotoxin. The protein is Leukotoxin export ATP-binding protein LtxB of Aggregatibacter actinomycetemcomitans (Actinobacillus actinomycetemcomitans).